Here is a 348-residue protein sequence, read N- to C-terminus: Putative methylthioribose-1-phosphate isomerase (348 aa).

Substrate contacts are provided by residues 55–57, Arg98, and Gln203; that span reads RGA. Asp244 functions as the Proton donor in the catalytic mechanism. Residue 253–254 participates in substrate binding; that stretch reads NK.

It belongs to the eIF-2B alpha/beta/delta subunits family. MtnA subfamily.

The enzyme catalyses 5-(methylsulfanyl)-alpha-D-ribose 1-phosphate = 5-(methylsulfanyl)-D-ribulose 1-phosphate. Its function is as follows. Catalyzes the interconversion of methylthioribose-1-phosphate (MTR-1-P) into methylthioribulose-1-phosphate (MTRu-1-P). This Methanosarcina acetivorans (strain ATCC 35395 / DSM 2834 / JCM 12185 / C2A) protein is Putative methylthioribose-1-phosphate isomerase.